A 785-amino-acid polypeptide reads, in one-letter code: B-cell scaffold protein with ankyrin repeats (785 aa).

Residues 1–154 (MLPAAPGKGL…DYISVIQSII (154 aa)) form an interaction with ITPR2 region. The TIR domain maps to 25–153 (NTKDIIMIYE…EDYISVIQSI (129 aa)). The DBB domain occupies 200–327 (VLPTEIPCEN…EIPYYEFQSL (128 aa)). 2 ANK repeats span residues 342–371 (ELPTLLHCAAKFGLKNLAIHLLQCSGATWA) and 378–408 (EGSDPAHIAERHGHKELKKIFEDFSIQEIDI). Disordered regions lie at residues 433-480 (PAFH…SESS), 493-514 (GADPENNSQEPLMSSRPPLPPP), 538-578 (QMER…EDPY), and 606-625 (FIINRPPAPTPRPTSIPPKE). Residues 553 to 568 (ETGDEPKGEKEKKEEE) show a composition bias toward basic and acidic residues. Positions 569-578 (KEQEEEEDPY) are enriched in acidic residues. Positions 611-621 (PPAPTPRPTSI) are enriched in pro residues.

Interacts with LYN, ITPR1 and ITPR2. In terms of processing, phosphorylated on tyrosines upon BCR activation. In terms of tissue distribution, expressed in B-cell but not T-cell or myeloid cell lines. Highest expression in CD19(+) B-cells, with very low expression in other cell populations.

Its function is as follows. Involved in B-cell receptor (BCR)-induced Ca(2+) mobilization from intracellular stores. Promotes Lyn-mediated phosphorylation of IP3 receptors 1 and 2. This Homo sapiens (Human) protein is B-cell scaffold protein with ankyrin repeats (BANK1).